Here is a 486-residue protein sequence, read N- to C-terminus: N-succinylglutamate 5-semialdehyde dehydrogenase (486 aa).

220–225 (GSSRTG) is a binding site for NAD(+). Residues Glu-243 and Cys-277 contribute to the active site.

It belongs to the aldehyde dehydrogenase family. AstD subfamily.

The catalysed reaction is N-succinyl-L-glutamate 5-semialdehyde + NAD(+) + H2O = N-succinyl-L-glutamate + NADH + 2 H(+). The protein operates within amino-acid degradation; L-arginine degradation via AST pathway; L-glutamate and succinate from L-arginine: step 4/5. Its function is as follows. Catalyzes the NAD-dependent reduction of succinylglutamate semialdehyde into succinylglutamate. The protein is N-succinylglutamate 5-semialdehyde dehydrogenase of Shewanella woodyi (strain ATCC 51908 / MS32).